A 544-amino-acid polypeptide reads, in one-letter code: Tyrosine-protein kinase fynb (544 aa).

G2 carries the N-myristoyl glycine lipid modification. 2 S-palmitoyl cysteine lipidation sites follow: C3 and C6. The SH3 domain maps to 89 to 150 (TGVTLFVALY…PSNYVAPVDS (62 aa)). The region spanning 156 to 253 (WYFGKLGRKD…GLCCRLVVPC (98 aa)) is the SH2 domain. Residues 278 to 531 (LQLIKRLGNG…YLQAFLEDYF (254 aa)) enclose the Protein kinase domain. Residues 284–292 (LGNGQFGEV) and K306 each bind ATP. D397 functions as the Proton acceptor in the catalytic mechanism. A Phosphotyrosine; by autocatalysis modification is found at Y427. Residue Y538 is modified to Phosphotyrosine.

It belongs to the protein kinase superfamily. Tyr protein kinase family. SRC subfamily. Requires Mn(2+) as cofactor.

It is found in the cytoplasm. It catalyses the reaction L-tyrosyl-[protein] + ATP = O-phospho-L-tyrosyl-[protein] + ADP + H(+). Its activity is regulated as follows. Inhibited by phosphorylation of Tyr-538 by leukocyte common antigen and activated by dephosphorylation of this site. Tyrosine-protein kinase implicated in the control of cell growth. Plays a role in the regulation of intracellular calcium levels. Required in brain development and mature brain function with important roles in the regulation of axon growth, axon guidance, and neurite extension. Role in CNTN1-mediated signaling. This is Tyrosine-protein kinase fynb (fynb) from Danio rerio (Zebrafish).